The primary structure comprises 118 residues: Small ribosomal subunit protein uS13 (118 aa).

The disordered stretch occupies residues 94–118; that stretch reads GLPVRGQRTKTNARTRKGPRKPIKK.

Belongs to the universal ribosomal protein uS13 family. Part of the 30S ribosomal subunit. Forms a loose heterodimer with protein S19. Forms two bridges to the 50S subunit in the 70S ribosome.

In terms of biological role, located at the top of the head of the 30S subunit, it contacts several helices of the 16S rRNA. In the 70S ribosome it contacts the 23S rRNA (bridge B1a) and protein L5 of the 50S subunit (bridge B1b), connecting the 2 subunits; these bridges are implicated in subunit movement. Contacts the tRNAs in the A and P-sites. This Edwardsiella ictaluri (strain 93-146) protein is Small ribosomal subunit protein uS13.